A 1642-amino-acid chain; its full sequence is Cholesterol transporter ABCA5 (1642 aa).

The chain crosses the membrane as a helical span at residues Ser-32–Met-52. N-linked (GlcNAc...) asparagine glycans are attached at residues Asn-86 and Asn-190. 6 helical membrane passes run Val-220–Ile-240, Leu-264–Ile-284, Ile-297–Leu-317, Val-327–Leu-347, Leu-355–Met-375, and Leu-396–Tyr-416. Asn-458 is a glycosylation site (N-linked (GlcNAc...) asparagine). An ABC transporter 1 domain is found at Ile-478–Tyr-713. ATP is bound at residue Gly-514 to Ser-521. Residues Leu-866–Phe-886 form a helical membrane-spanning segment. Residue Asn-919 is glycosylated (N-linked (GlcNAc...) asparagine). The chain crosses the membrane as a helical span at residues Val-967–Ile-987. N-linked (GlcNAc...) asparagine glycosylation is present at Asn-996. A run of 6 helical transmembrane segments spans residues Leu-1021–Met-1041, Val-1071–Phe-1091, Phe-1102–Ile-1122, Phe-1139–Gly-1159, Ala-1164–Ile-1184, and Leu-1207–His-1227. The ABC transporter 2 domain maps to Ile-1290–Lys-1533. Gly-1333–Ser-1340 provides a ligand contact to ATP.

Belongs to the ABC transporter superfamily. ABCA family. In terms of processing, N-glycosylated. Expressed in testis, epididymis, lung and brain.

The protein localises to the lysosome membrane. It is found in the late endosome membrane. It localises to the golgi apparatus membrane. The protein resides in the cell membrane. The enzyme catalyses cholesterol(in) + ATP + H2O = cholesterol(out) + ADP + phosphate + H(+). In terms of biological role, cholesterol efflux transporter in macrophages that is responsible for APOAI/high-density lipoproteins (HDL) formation at the plasma membrane under high cholesterol levels and participates in reverse cholesterol transport. May play a role in the processing of autolysosomes. The polypeptide is Cholesterol transporter ABCA5 (Rattus norvegicus (Rat)).